The chain runs to 183 residues: Capsid protein (183 aa).

The tract at residues Asn-136 to Cys-183 is disordered. The span at Val-149–Ser-176 shows a compositional bias: basic residues. Phosphoserine; by host occurs at positions 155, 162, and 170. A 1; half-length repeat occupies Ser-155–Pro-161. The tract at residues Ser-155–Gln-177 is 3 X 8 AA repeats of S-P-R-R-R-[PR]-S-Q. Positions Arg-158–Arg-175 match the Bipartite nuclear localization signal motif. Repeat copies occupy residues Ser-162 to Gln-169 and Ser-170 to Gln-177. An RNA binding region spans residues Gln-177–Cys-183.

This sequence belongs to the orthohepadnavirus core antigen family. As to quaternary structure, homodimerizes, then multimerizes. Interacts with cytosol exposed regions of viral L glycoprotein present in the reticulum-to-Golgi compartment. Interacts with human FLNB. Phosphorylated form interacts with host importin alpha; this interaction depends on the exposure of the NLS, which itself depends upon genome maturation and/or phosphorylation of the capsid protein. Interacts with host NUP153. Phosphorylated by host SRPK1, SRPK2, and maybe protein kinase C or GAPDH. Phosphorylation is critical for pregenomic RNA packaging. Protein kinase C phosphorylation is stimulated by HBx protein and may play a role in transport of the viral genome to the nucleus at the late step during the viral replication cycle.

It is found in the virion. It localises to the host cytoplasm. Its function is as follows. Self assembles to form an icosahedral capsid. Most capsids appear to be large particles with an icosahedral symmetry of T=4 and consist of 240 copies of capsid protein, though a fraction forms smaller T=3 particles consisting of 180 capsid proteins. Entering capsids are transported along microtubules to the nucleus. Phosphorylation of the capsid is thought to induce exposure of nuclear localization signal in the C-terminal portion of the capsid protein that allows binding to the nuclear pore complex via the importin (karyopherin-) alpha and beta. Capsids are imported in intact form through the nuclear pore into the nuclear basket, where it probably binds NUP153. Only capsids that contain the mature viral genome can release the viral DNA and capsid protein into the nucleoplasm. Immature capsids get stuck in the basket. Capsids encapsulate the pre-genomic RNA and the P protein. Pre-genomic RNA is reverse-transcribed into DNA while the capsid is still in the cytoplasm. The capsid can then either be directed to the nucleus, providing more genomes for transcription, or bud through the endoplasmic reticulum to provide new virions. This chain is Capsid protein, found in Hepatitis B virus genotype B/C subtype adw (isolate Okinawa/pODW282/1998) (HBV-B).